A 167-amino-acid polypeptide reads, in one-letter code: Photosystem I assembly protein Ycf3 (167 aa).

3 TPR repeats span residues 35–68, 72–105, and 120–153; these read AFAYYRDGMSAQAEGEYAEALQNYYEAMRLEVDA, SYILYNIGLIHTSNGEHAKALEYYYQAIERNPSL, and GEQAIEEGNSEAAEILFDQAASYWKQAIRLAPTS.

This sequence belongs to the Ycf3 family.

The protein resides in the plastid. It localises to the chloroplast thylakoid membrane. Its function is as follows. Essential for the assembly of the photosystem I (PSI) complex. May act as a chaperone-like factor to guide the assembly of the PSI subunits. The protein is Photosystem I assembly protein Ycf3 of Chlorokybus atmophyticus (Soil alga).